We begin with the raw amino-acid sequence, 490 residues long: Tryptophan decarboxylase (490 aa).

The residue at position 306 (K306) is an N6-(pyridoxal phosphate)lysine.

This sequence belongs to the group II decarboxylase family. In terms of assembly, homodimer. Pyridoxal 5'-phosphate is required as a cofactor.

The protein localises to the cytoplasm. The catalysed reaction is L-tryptophan + H(+) = tryptamine + CO2. With respect to regulation, inhibited by (S)-alpha-fluoromethyltryptophan. Functionally, catalyzes the decarboxylation of tryptophan to tryptamine. Tryptamine is a neurotransmitter that induces the release of serotonin, which is suggested to modulate gastrointestinal motility. Therefore, the tryptophan decarboxylase from the gut bacteria Ruminococcus gnavus (strain ATCC 29149 / VPI C7-9) may influence host brain and behavior. Has weak activity with tyrosine and phenylalanine. The polypeptide is Tryptophan decarboxylase (Mediterraneibacter gnavus (strain ATCC 29149 / DSM 114966 / JCM 6515 / VPI C7-9) (Ruminococcus gnavus)).